The primary structure comprises 376 residues: Protein FAM199X (376 aa).

A compositionally biased stretch (basic and acidic residues) spans Y237–K253. The segment at Y237–S350 is disordered. Over residues T255–S300 the composition is skewed to low complexity. Residues D318–Q337 show a composition bias toward basic residues. Residues K320–L349 adopt a coiled-coil conformation. Positions L338–L349 are enriched in basic and acidic residues.

Belongs to the FAM199 family.

The sequence is that of Protein FAM199X (fam199x) from Xenopus tropicalis (Western clawed frog).